The primary structure comprises 366 residues: Ferredoxin--NADP reductase (366 aa).

Residues D51, Q59, Y64, V104, F139, D308, and T349 each coordinate FAD.

It belongs to the ferredoxin--NADP reductase type 2 family. As to quaternary structure, homodimer. FAD serves as cofactor.

It catalyses the reaction 2 reduced [2Fe-2S]-[ferredoxin] + NADP(+) + H(+) = 2 oxidized [2Fe-2S]-[ferredoxin] + NADPH. This Polaromonas sp. (strain JS666 / ATCC BAA-500) protein is Ferredoxin--NADP reductase.